We begin with the raw amino-acid sequence, 390 residues long: Succinate--CoA ligase [ADP-forming] subunit beta (390 aa).

Residues 9 to 245 (KELLSRYGLP…KSQENEREVK (237 aa)) form the ATP-grasp domain. ATP contacts are provided by residues Lys46, 53–55 (GRG), Glu100, Tyr103, and Glu108. 2 residues coordinate Mg(2+): Asn200 and Asp214. Residues Asn265 and 322–324 (GIV) each bind substrate.

This sequence belongs to the succinate/malate CoA ligase beta subunit family. Heterotetramer of two alpha and two beta subunits. Requires Mg(2+) as cofactor.

It carries out the reaction succinate + ATP + CoA = succinyl-CoA + ADP + phosphate. The catalysed reaction is GTP + succinate + CoA = succinyl-CoA + GDP + phosphate. It participates in carbohydrate metabolism; tricarboxylic acid cycle; succinate from succinyl-CoA (ligase route): step 1/1. Functionally, succinyl-CoA synthetase functions in the citric acid cycle (TCA), coupling the hydrolysis of succinyl-CoA to the synthesis of either ATP or GTP and thus represents the only step of substrate-level phosphorylation in the TCA. The beta subunit provides nucleotide specificity of the enzyme and binds the substrate succinate, while the binding sites for coenzyme A and phosphate are found in the alpha subunit. The sequence is that of Succinate--CoA ligase [ADP-forming] subunit beta from Chromobacterium violaceum (strain ATCC 12472 / DSM 30191 / JCM 1249 / CCUG 213 / NBRC 12614 / NCIMB 9131 / NCTC 9757 / MK).